The chain runs to 1070 residues: Carbamoyl phosphate synthase large chain (1070 aa).

Residues 1-399 (MPKREDIKKV…SLLKAFKSLD (399 aa)) are carboxyphosphate synthetic domain. Positions 129, 169, 175, 176, 208, 210, 215, 241, 242, 243, 284, and 296 each coordinate ATP. One can recognise an ATP-grasp 1 domain in the interval 133–325 (KETMLRIGEK…IARVTAKIAI (193 aa)). Residues Q284, E296, and N298 each coordinate Mg(2+). Residues Q284, E296, and N298 each contribute to the Mn(2+) site. The interval 400–540 (IDSQLGNKRW…YSTYEDTCET (141 aa)) is oligomerization domain. Positions 541–931 (NPTDRKKILI…YKAELAADNL (391 aa)) are carbamoyl phosphate synthetic domain. The 192-residue stretch at 672–863 (YVLMQKFGIL…LAKIAARVIA (192 aa)) folds into the ATP-grasp 2 domain. R708, D747, L749, E754, G779, V780, H781, S782, Q822, and E834 together coordinate ATP. Q822, E834, and N836 together coordinate Mg(2+). Mn(2+)-binding residues include Q822, E834, and N836. An MGS-like domain is found at 930–1070 (NLLPLTGKVF…INEYHKEMGL (141 aa)). Residues 932 to 1070 (LPLTGKVFLS…INEYHKEMGL (139 aa)) form an allosteric domain region.

This sequence belongs to the CarB family. In terms of assembly, composed of two chains; the small (or glutamine) chain promotes the hydrolysis of glutamine to ammonia, which is used by the large (or ammonia) chain to synthesize carbamoyl phosphate. Tetramer of heterodimers (alpha,beta)4. It depends on Mg(2+) as a cofactor. Mn(2+) is required as a cofactor.

It catalyses the reaction hydrogencarbonate + L-glutamine + 2 ATP + H2O = carbamoyl phosphate + L-glutamate + 2 ADP + phosphate + 2 H(+). The enzyme catalyses hydrogencarbonate + NH4(+) + 2 ATP = carbamoyl phosphate + 2 ADP + phosphate + 2 H(+). It participates in amino-acid biosynthesis; L-arginine biosynthesis; carbamoyl phosphate from bicarbonate: step 1/1. It functions in the pathway pyrimidine metabolism; UMP biosynthesis via de novo pathway; (S)-dihydroorotate from bicarbonate: step 1/3. Functionally, large subunit of the glutamine-dependent carbamoyl phosphate synthetase (CPSase). CPSase catalyzes the formation of carbamoyl phosphate from the ammonia moiety of glutamine, carbonate, and phosphate donated by ATP, constituting the first step of 2 biosynthetic pathways, one leading to arginine and/or urea and the other to pyrimidine nucleotides. The large subunit (synthetase) binds the substrates ammonia (free or transferred from glutamine from the small subunit), hydrogencarbonate and ATP and carries out an ATP-coupled ligase reaction, activating hydrogencarbonate by forming carboxy phosphate which reacts with ammonia to form carbamoyl phosphate. This chain is Carbamoyl phosphate synthase large chain, found in Methanosarcina acetivorans (strain ATCC 35395 / DSM 2834 / JCM 12185 / C2A).